Reading from the N-terminus, the 431-residue chain is Fumarylacetoacetase (431 aa).

D133 lines the Ca(2+) pocket. Y135 lines the substrate pocket. H140 acts as the Proton acceptor in catalysis. R149 is a binding site for substrate. Ca(2+) contacts are provided by E209, E211, and D243. D243 lines the Mg(2+) pocket. Positions 250 and 254 each coordinate substrate. Mg(2+)-binding residues include K263 and T267. T362 lines the substrate pocket.

This sequence belongs to the FAH family. Ca(2+) serves as cofactor. Mg(2+) is required as a cofactor.

The enzyme catalyses 4-fumarylacetoacetate + H2O = acetoacetate + fumarate + H(+). The protein operates within amino-acid degradation; L-phenylalanine degradation; acetoacetate and fumarate from L-phenylalanine: step 6/6. Use of phenylalanine and phenylacetate as a carbon source. The polypeptide is Fumarylacetoacetase (fahA) (Emericella nidulans (strain FGSC A4 / ATCC 38163 / CBS 112.46 / NRRL 194 / M139) (Aspergillus nidulans)).